Consider the following 222-residue polypeptide: Sugar fermentation stimulation protein homolog (222 aa).

Belongs to the SfsA family.

This Thermoplasma acidophilum (strain ATCC 25905 / DSM 1728 / JCM 9062 / NBRC 15155 / AMRC-C165) protein is Sugar fermentation stimulation protein homolog.